The sequence spans 906 residues: Peroxisomal hydratase-dehydrogenase-epimerase (906 aa).

Short-chain dehydrogenase like regions lie at residues 5–228 (DFKD…SSAE) and 319–532 (SLKD…GTDD). NADP(+)-binding residues include I13, K52, N98, and K131. Residues S149 and Y163 each act as proton donor in the active site. Y163 and K167 together coordinate NADP(+). Catalysis depends on Y163, which acts as the Proton acceptor. K167 functions as the Lowers pKa of active site Tyr in the catalytic mechanism. The Proton acceptor role is filled by Y467. The interval 600-633 (AVGGDDDDDDEDEEEDEGDEEEDEEDEEEDDPVW) is disordered. Positions 603–630 (GDDDDDDEDEEEDEGDEEEDEEDEEEDD) are enriched in acidic residues. The (3R)-3-hydroxydecanoyl-CoA site is built by H699, G700, K729, Y757, D808, N810, G831, F856, T857, and G858. The 112-residue stretch at 782-893 (APKRAPDYQV…VVDRGTIAIN (112 aa)) folds into the MaoC-like domain. The Microbody targeting signal motif lies at 904–906 (AKI).

Belongs to the short-chain dehydrogenases/reductases (SDR) family. As to quaternary structure, monomer.

It localises to the peroxisome. It carries out the reaction a (3R)-3-hydroxyacyl-CoA = a (2E)-enoyl-CoA + H2O. The catalysed reaction is a (3R)-3-hydroxyacyl-CoA + NAD(+) = a 3-oxoacyl-CoA + NADH + H(+). It functions in the pathway lipid metabolism; fatty acid beta-oxidation. In terms of biological role, second trifunctional enzyme acting on the beta-oxidation pathway for fatty acids, possessing hydratase-dehydrogenase-epimerase activities. Converts trans-2-enoyl-CoA via D-3-hydroxyacyl-CoA to 3-ketoacyl-CoA. This is Peroxisomal hydratase-dehydrogenase-epimerase from Candida tropicalis (Yeast).